The sequence spans 61 residues: Photosystem II reaction center protein K (61 aa).

The propeptide occupies 1–24 (MLNTFSLIGICLNSTLYSSSFFFG). A helical membrane pass occupies residues 36-56 (IVDIMPVIPLFFFLLAFVWQA).

This sequence belongs to the PsbK family. PSII is composed of 1 copy each of membrane proteins PsbA, PsbB, PsbC, PsbD, PsbE, PsbF, PsbH, PsbI, PsbJ, PsbK, PsbL, PsbM, PsbT, PsbX, PsbY, PsbZ, Psb30/Ycf12, at least 3 peripheral proteins of the oxygen-evolving complex and a large number of cofactors. It forms dimeric complexes.

It localises to the plastid. It is found in the chloroplast thylakoid membrane. One of the components of the core complex of photosystem II (PSII). PSII is a light-driven water:plastoquinone oxidoreductase that uses light energy to abstract electrons from H(2)O, generating O(2) and a proton gradient subsequently used for ATP formation. It consists of a core antenna complex that captures photons, and an electron transfer chain that converts photonic excitation into a charge separation. The protein is Photosystem II reaction center protein K of Solanum bulbocastanum (Wild potato).